The chain runs to 253 residues: MGRKFFVGGNWKCNGTSEEVKKIVTLLNEAEVPSEDVVEVVVSPPYVFLPFVKNLLRADFHVAAQNCWVKKGGAFTGEVSAEMLVNLGIPWVILGHSERRALLNESNEFVGDKTAYALSQGLKVIACVGETLEQREAGSTISVVAAQTKAIAEKVSDWTNIVVAYEPVWAIGTGKVASPAQAQEVHFELRKWIKENVGADVAGSVRIIYGGSVNGANSKELAGQPDIDGFLVGGASLKPEFVDIIKSATVKSS.

Positions 10 and 12 each coordinate substrate. His-96 functions as the Electrophile in the catalytic mechanism. The active-site Proton acceptor is the Glu-166.

Belongs to the triosephosphate isomerase family. As to quaternary structure, homodimer.

Its subcellular location is the cytoplasm. It catalyses the reaction D-glyceraldehyde 3-phosphate = dihydroxyacetone phosphate. Its pathway is carbohydrate biosynthesis; gluconeogenesis. It functions in the pathway carbohydrate degradation; glycolysis; D-glyceraldehyde 3-phosphate from glycerone phosphate: step 1/1. This chain is Triosephosphate isomerase, cytosolic, found in Coptis japonica (Japanese goldthread).